Reading from the N-terminus, the 225-residue chain is Two-component response regulator ARR8 (225 aa).

One can recognise a Response regulatory domain in the interval 10–145 (HVLAVDDSLF…DLTKLKPHMM (136 aa)). Residue Asp-78 is modified to 4-aspartylphosphate.

The protein belongs to the ARR family. Type-A subfamily. Two-component system major event consists of a His-to-Asp phosphorelay between a sensor histidine kinase (HK) and a response regulator (RR). In plants, the His-to-Asp phosphorelay involves an additional intermediate named Histidine-containing phosphotransfer protein (HPt). This multistep phosphorelay consists of a His-Asp-His-Asp sequential transfer of a phosphate group between first a His and an Asp of the HK protein, followed by the transfer to a conserved His of the HPt protein and finally the transfer to an Asp in the receiver domain of the RR protein. Predominantly expressed in roots.

It is found in the nucleus. Functions as a response regulator involved in His-to-Asp phosphorelay signal transduction system. Phosphorylation of the Asp residue in the receiver domain activates the ability of the protein to promote the transcription of target genes. Type-A response regulators seem to act as negative regulators of the cytokinin signaling. The sequence is that of Two-component response regulator ARR8 (ARR8) from Arabidopsis thaliana (Mouse-ear cress).